We begin with the raw amino-acid sequence, 393 residues long: S-adenosylmethionine synthase 2 (393 aa).

A Mg(2+)-binding site is contributed by glutamate 9. Histidine 15 serves as a coordination point for ATP. K(+) is bound at residue glutamate 43. Residues glutamate 56 and glutamine 99 each coordinate L-methionine. ATP contacts are provided by residues aspartate 167 to lysine 169, serine 235 to phenylalanine 238, aspartate 246, arginine 252 to lysine 253, alanine 269, lysine 273, and lysine 277. Residue aspartate 246 participates in L-methionine binding. Lysine 277 lines the L-methionine pocket.

Belongs to the AdoMet synthase family. Homotetramer. The cofactor is Mn(2+). Requires Mg(2+) as cofactor. Co(2+) serves as cofactor. K(+) is required as a cofactor.

It localises to the cytoplasm. The enzyme catalyses L-methionine + ATP + H2O = S-adenosyl-L-methionine + phosphate + diphosphate. It functions in the pathway amino-acid biosynthesis; S-adenosyl-L-methionine biosynthesis; S-adenosyl-L-methionine from L-methionine: step 1/1. Catalyzes the formation of S-adenosylmethionine from methionine and ATP. The reaction comprises two steps that are both catalyzed by the same enzyme: formation of S-adenosylmethionine (AdoMet) and triphosphate, and subsequent hydrolysis of the triphosphate. The chain is S-adenosylmethionine synthase 2 (METK2) from Vitis vinifera (Grape).